The primary structure comprises 218 residues: tRNA (guanine-N(7)-)-methyltransferase (218 aa).

Residues 1–26 (MRLKNKPWANELVEEHPESALDRPDP) form a disordered region. The span at 13 to 26 (VEEHPESALDRPDP) shows a compositional bias: basic and acidic residues. Glutamate 45, glutamate 70, aspartate 97, and aspartate 119 together coordinate S-adenosyl-L-methionine. Aspartate 119 is a catalytic residue. Lysine 123 serves as a coordination point for substrate. Positions 125 to 130 (RHEKRR) are interaction with RNA. Substrate-binding positions include aspartate 155 and 195–198 (TEYE).

This sequence belongs to the class I-like SAM-binding methyltransferase superfamily. TrmB family.

It carries out the reaction guanosine(46) in tRNA + S-adenosyl-L-methionine = N(7)-methylguanosine(46) in tRNA + S-adenosyl-L-homocysteine. Its pathway is tRNA modification; N(7)-methylguanine-tRNA biosynthesis. Catalyzes the formation of N(7)-methylguanine at position 46 (m7G46) in tRNA. The polypeptide is tRNA (guanine-N(7)-)-methyltransferase (Lactobacillus delbrueckii subsp. bulgaricus (strain ATCC 11842 / DSM 20081 / BCRC 10696 / JCM 1002 / NBRC 13953 / NCIMB 11778 / NCTC 12712 / WDCM 00102 / Lb 14)).